The following is a 66-amino-acid chain: uncharacterized protein (66 aa).

A helical membrane pass occupies residues 11–31 (PFPLLGVWIIVIIIVAVIGLL).

Its subcellular location is the membrane. This is an uncharacterized protein from Chenopodium amaranticolor (Quinoa).